The chain runs to 186 residues: Elongation factor P (186 aa).

It belongs to the elongation factor P family.

It is found in the cytoplasm. It functions in the pathway protein biosynthesis; polypeptide chain elongation. Functionally, involved in peptide bond synthesis. Stimulates efficient translation and peptide-bond synthesis on native or reconstituted 70S ribosomes in vitro. Probably functions indirectly by altering the affinity of the ribosome for aminoacyl-tRNA, thus increasing their reactivity as acceptors for peptidyl transferase. The chain is Elongation factor P from Shewanella halifaxensis (strain HAW-EB4).